The primary structure comprises 185 residues: Ribosome-recycling factor (185 aa).

The segment covering 142–164 has biased composition (basic and acidic residues); it reads IKKDGDAGEDDVTRAEKDLDKST. The interval 142–173 is disordered; sequence IKKDGDAGEDDVTRAEKDLDKSTHQYTSQVDD.

This sequence belongs to the RRF family.

Its subcellular location is the cytoplasm. Its function is as follows. Responsible for the release of ribosomes from messenger RNA at the termination of protein biosynthesis. May increase the efficiency of translation by recycling ribosomes from one round of translation to another. This Mycolicibacterium gilvum (strain PYR-GCK) (Mycobacterium gilvum (strain PYR-GCK)) protein is Ribosome-recycling factor.